Here is a 562-residue protein sequence, read N- to C-terminus: Potassium-transporting ATPase potassium-binding subunit (562 aa).

Helical transmembrane passes span 6-26, 62-82, 132-152, 175-195, 253-273, 283-303, 327-347, 356-376, 379-399, 416-436, 483-503, and 526-546; these read FLLI…LGGF, YALA…VLLM, GLTV…FALI, LYVL…QGVL, FVQM…FGQV, LIWA…YAEL, FGIL…CGAV, ALGG…FGGV, GLYG…LMIG, MTAL…ALAL, LLLA…VLAI, and LFIG…FIPA.

Belongs to the KdpA family. The system is composed of three essential subunits: KdpA, KdpB and KdpC.

Its subcellular location is the cell inner membrane. Its function is as follows. Part of the high-affinity ATP-driven potassium transport (or Kdp) system, which catalyzes the hydrolysis of ATP coupled with the electrogenic transport of potassium into the cytoplasm. This subunit binds the periplasmic potassium ions and delivers the ions to the membrane domain of KdpB through an intramembrane tunnel. In Yersinia pseudotuberculosis serotype IB (strain PB1/+), this protein is Potassium-transporting ATPase potassium-binding subunit.